A 124-amino-acid polypeptide reads, in one-letter code: Small ribosomal subunit protein bS6 (124 aa).

It belongs to the bacterial ribosomal protein bS6 family.

Its function is as follows. Binds together with bS18 to 16S ribosomal RNA. The sequence is that of Small ribosomal subunit protein bS6 from Chromobacterium violaceum (strain ATCC 12472 / DSM 30191 / JCM 1249 / CCUG 213 / NBRC 12614 / NCIMB 9131 / NCTC 9757 / MK).